We begin with the raw amino-acid sequence, 2579 residues long: Ectopic P granules protein 5 homolog (2579 aa).

Disordered stretches follow at residues 1–46 (MAEA…SREQ) and 92–132 (NEES…GTKV). The segment covering 7–23 (PQRRAKAKASRTKTKEK) has biased composition (basic residues). Residues 24–34 (KKYETPQREES) are compositionally biased toward basic and acidic residues. Thr134 is subject to Phosphothreonine. The disordered stretch occupies residues 535–564 (PSERKPSSSGPGSGTWTLVDEGGEEDEDPE). Acidic residues predominate over residues 555–564 (EGGEEDEDPE). Positions 1607 to 1633 (MHKNEAISQQLHVLRKEVKQLQAEAAK) form a coiled coil.

This sequence belongs to the EPG5 family. As to quaternary structure, interacts with RAN.

The protein resides in the cytoplasm. It is found in the perinuclear region. The protein localises to the lysosome. Its function is as follows. Involved in autophagy. May play a role in a late step of autophagy, such as clearance of autophagosomal cargo. Plays a key role in innate and adaptive immune response triggered by unmethylated cytidine-phosphate-guanosine (CpG) dinucleotides from pathogens, and mediated by the nucleotide-sensing receptor TLR9. It is necessary for the translocation of CpG dinucleotides from early endosomes to late endosomes and lysosomes, where TLR9 is located. This is Ectopic P granules protein 5 homolog (EPG5) from Homo sapiens (Human).